The chain runs to 472 residues: ATP-dependent rRNA helicase rrp3 (472 aa).

Residues Met-1–Pro-51 are disordered. Over residues Ala-10–Asp-19 the composition is skewed to basic and acidic residues. Residues Ala-20–Val-29 are compositionally biased toward polar residues. The Q motif motif lies at Lys-52–Ala-80. A Helicase ATP-binding domain is found at Ile-83–Val-254. Ala-96 to Thr-103 provides a ligand contact to ATP. The DEAD box signature appears at Asp-202–Asp-205. The 145-residue stretch at Tyr-282–Met-426 folds into the Helicase C-terminal domain. A disordered region spans residues Gly-451–Gly-472. Residues Thr-452–Arg-462 show a composition bias toward basic residues.

Belongs to the DEAD box helicase family. DDX47/RRP3 subfamily. In terms of assembly, interacts with the SSU processome.

The protein resides in the nucleus. The catalysed reaction is ATP + H2O = ADP + phosphate + H(+). In terms of biological role, ATP-dependent rRNA helicase required for pre-ribosomal RNA processing. Involved in the maturation of the 35S-pre-rRNA and to its cleavage to mature 18S rRNA. The protein is ATP-dependent rRNA helicase rrp3 of Neosartorya fischeri (strain ATCC 1020 / DSM 3700 / CBS 544.65 / FGSC A1164 / JCM 1740 / NRRL 181 / WB 181) (Aspergillus fischerianus).